Here is a 213-residue protein sequence, read N- to C-terminus: Thymidylate kinase (213 aa).

9–16 (GVEGCGKT) contributes to the ATP binding site.

This sequence belongs to the thymidylate kinase family.

It catalyses the reaction dTMP + ATP = dTDP + ADP. In terms of biological role, phosphorylation of dTMP to form dTDP in both de novo and salvage pathways of dTTP synthesis. The chain is Thymidylate kinase from Geotalea uraniireducens (strain Rf4) (Geobacter uraniireducens).